Here is a 345-residue protein sequence, read N- to C-terminus: Phosphoribosylformylglycinamidine cyclo-ligase (345 aa).

It belongs to the AIR synthase family.

Its subcellular location is the cytoplasm. The enzyme catalyses 2-formamido-N(1)-(5-O-phospho-beta-D-ribosyl)acetamidine + ATP = 5-amino-1-(5-phospho-beta-D-ribosyl)imidazole + ADP + phosphate + H(+). Its pathway is purine metabolism; IMP biosynthesis via de novo pathway; 5-amino-1-(5-phospho-D-ribosyl)imidazole from N(2)-formyl-N(1)-(5-phospho-D-ribosyl)glycinamide: step 2/2. The chain is Phosphoribosylformylglycinamidine cyclo-ligase from Staphylococcus carnosus (strain TM300).